A 283-amino-acid chain; its full sequence is Protein FdhE homolog (283 aa).

It belongs to the FdhE family.

Its subcellular location is the cytoplasm. Its function is as follows. Necessary for formate dehydrogenase activity. The chain is Protein FdhE homolog from Aquifex aeolicus (strain VF5).